Reading from the N-terminus, the 678-residue chain is Glycine--tRNA ligase beta subunit (678 aa).

Belongs to the class-II aminoacyl-tRNA synthetase family. In terms of assembly, tetramer of two alpha and two beta subunits.

Its subcellular location is the cytoplasm. It carries out the reaction tRNA(Gly) + glycine + ATP = glycyl-tRNA(Gly) + AMP + diphosphate. The polypeptide is Glycine--tRNA ligase beta subunit (Sulfurihydrogenibium sp. (strain YO3AOP1)).